A 378-amino-acid polypeptide reads, in one-letter code: Branched-chain-amino-acid aminotransferase (378 aa).

Lys213 bears the N6-(pyridoxal phosphate)lysine mark.

The protein belongs to the class-IV pyridoxal-phosphate-dependent aminotransferase family. In terms of assembly, homodimer. It depends on pyridoxal 5'-phosphate as a cofactor.

It carries out the reaction L-leucine + 2-oxoglutarate = 4-methyl-2-oxopentanoate + L-glutamate. It catalyses the reaction L-isoleucine + 2-oxoglutarate = (S)-3-methyl-2-oxopentanoate + L-glutamate. The catalysed reaction is L-valine + 2-oxoglutarate = 3-methyl-2-oxobutanoate + L-glutamate. Its function is as follows. Catalyzes the first reaction in the catabolism of the essential branched chain amino acids leucine, isoleucine, and valine. The polypeptide is Branched-chain-amino-acid aminotransferase (bcaA) (Dictyostelium discoideum (Social amoeba)).